We begin with the raw amino-acid sequence, 330 residues long: MKSFKIISLLLAILFLASCQTNTASDDEALETVEVMLDWYPNAVHTFLYVAIENGYFAEEGLDVDIVFPTNPTDPIQLTASGAIPLALSYQPDVILARSKDLPVVSVASVVRSPLNHVMFLAEQDFDSPADLVGLTVGYPGIPVNEPILKTMVEAAGGDYEQVHLMDVGFELGASIVSGRADAVVGTYINHEYPVLKHEGHDISYFNPVDYGVPEYDELVLISNEAYVEESGEVLAAFWRAALKGYEWMVENPDEALNVLLTNQDEANFPLIQEVEEESLSILLEKMENPNGPFGGQDAESWEEVISWLDAHDWLEQPVVAEDAFSSITD.

The first 18 residues, 1 to 18 (MKSFKIISLLLAILFLAS), serve as a signal peptide directing secretion. A lipid anchor (N-palmitoyl cysteine) is attached at C19. C19 carries the S-diacylglycerol cysteine lipid modification. Residues 38-39 (DW), Y90, N145, Y188, and E192 contribute to the substrate site.

It belongs to the NMT1 family. In terms of assembly, the complex is likely composed of an ATP-binding protein (ThiZ), a transmembrane protein (ThiX) and a solute-binding protein (ThiY).

It localises to the cell membrane. The protein operates within cofactor biosynthesis; thiamine diphosphate biosynthesis. Functionally, participates in a thiamine pyrimidine salvage pathway as part of the ABC transporter complex ThiXYZ involved in the import of thiamine degradation products. Binds the formylaminopyrimidine N-formyl-4-amino-5-aminomethyl-2-methylpyrimidine (FAMP). Does not bind thiamine. The polypeptide is Formylaminopyrimidine-binding protein (Halalkalibacterium halodurans (strain ATCC BAA-125 / DSM 18197 / FERM 7344 / JCM 9153 / C-125) (Bacillus halodurans)).